A 201-amino-acid polypeptide reads, in one-letter code: Holliday junction branch migration complex subunit RuvA (201 aa).

The domain I stretch occupies residues 1–64 (MYEYIKGKYI…QDFIGLYGFL (64 aa)). The domain II stretch occupies residues 65 to 143 (TKDELEMFNK…STDISKGNSE (79 aa)). Residues 144–154 (INNLDVDYDEH) form a flexible linker region. The tract at residues 154–201 (HSKKLEEVRFALNSLGYSEKETDRAINNVDKSEGIENIIKSCLRFLMN) is domain III.

It belongs to the RuvA family. As to quaternary structure, homotetramer. Forms an RuvA(8)-RuvB(12)-Holliday junction (HJ) complex. HJ DNA is sandwiched between 2 RuvA tetramers; dsDNA enters through RuvA and exits via RuvB. An RuvB hexamer assembles on each DNA strand where it exits the tetramer. Each RuvB hexamer is contacted by two RuvA subunits (via domain III) on 2 adjacent RuvB subunits; this complex drives branch migration. In the full resolvosome a probable DNA-RuvA(4)-RuvB(12)-RuvC(2) complex forms which resolves the HJ.

It is found in the cytoplasm. In terms of biological role, the RuvA-RuvB-RuvC complex processes Holliday junction (HJ) DNA during genetic recombination and DNA repair, while the RuvA-RuvB complex plays an important role in the rescue of blocked DNA replication forks via replication fork reversal (RFR). RuvA specifically binds to HJ cruciform DNA, conferring on it an open structure. The RuvB hexamer acts as an ATP-dependent pump, pulling dsDNA into and through the RuvAB complex. HJ branch migration allows RuvC to scan DNA until it finds its consensus sequence, where it cleaves and resolves the cruciform DNA. This is Holliday junction branch migration complex subunit RuvA from Clostridium acetobutylicum (strain ATCC 824 / DSM 792 / JCM 1419 / IAM 19013 / LMG 5710 / NBRC 13948 / NRRL B-527 / VKM B-1787 / 2291 / W).